A 1538-amino-acid polypeptide reads, in one-letter code: Dicer-like protein 1 (1538 aa).

Positions 39-72 (DPAESSADVHKDEHSSDNSDNDNEAVPKPNDFSQ) are disordered. The segment covering 45 to 55 (ADVHKDEHSSD) has biased composition (basic and acidic residues). The Helicase ATP-binding domain maps to 134-315 (LFERAKTQNT…EAATRLETLL (182 aa)). 147–154 (LDTGSGKT) is a binding site for ATP. The DEAH box motif lies at 260–263 (DEAH). The 160-residue stretch at 460–619 (ELSKHFSDTT…ETLPEDRILH (160 aa)) folds into the Helicase C-terminal domain. A Dicer dsRNA-binding fold domain is found at 652–742 (AIAILARYAS…NSIYHRRLPA (91 aa)). A PAZ domain is found at 892 to 1020 (DTVSFVHNND…ICAEPLRISA (129 aa)). 2 RNase III domains span residues 1044–1203 (IALE…LSGG) and 1254–1406 (ARHV…VDSK). Residues Glu-1295, Asp-1392, and Glu-1395 each coordinate Mg(2+). Residues 1440–1508 (TFLHNKLTNE…SEKALAVLDG (69 aa)) enclose the DRBM domain. The Zn(2+) site is built by Cys-1452, His-1479, Cys-1520, and Cys-1522.

It belongs to the helicase family. Dicer subfamily. Mg(2+) serves as cofactor. The cofactor is Mn(2+).

Dicer-like endonuclease involved in cleaving double-stranded RNA in the RNA interference (RNAi) pathway. Produces 21 to 25 bp dsRNAs (siRNAs) which target the selective destruction of homologous RNAs leading to sequence-specific suppression of gene expression, called post-transcriptional gene silencing (PTGS). Part of a broad host defense response against viral infection and transposons. In Neosartorya fischeri (strain ATCC 1020 / DSM 3700 / CBS 544.65 / FGSC A1164 / JCM 1740 / NRRL 181 / WB 181) (Aspergillus fischerianus), this protein is Dicer-like protein 1 (dcl1).